Here is a 666-residue protein sequence, read N- to C-terminus: NAD(P)H-quinone oxidoreductase subunit 5, organellar chromatophore 1 (666 aa).

The next 15 helical transmembrane spans lie at 8–28, 41–61, 90–110, 121–141, 145–165, 190–210, 220–240, 259–279, 293–313, 328–348, 396–416, 428–448, 497–517, 542–562, and 643–663; these read LVWL…FGLI, AALL…MVLA, VDPI…LVMV, SYVR…ALIL, LLEI…LIGF, FLLG…QIVA, GSIP…GPMA, TPIS…FLVA, IIVA…ALIQ, LGYM…FHLI, GITF…AGFW, SYPL…FYMF, TLPL…GSPW, FLPL…IATI, and GRPQ…IVIF.

The protein belongs to the complex I subunit 5 family. In terms of assembly, NDH is composed of at least 16 different subunits, 5 of which are encoded in the nucleus.

The protein localises to the plastid. It localises to the organellar chromatophore thylakoid membrane. The enzyme catalyses a plastoquinone + NADH + (n+1) H(+)(in) = a plastoquinol + NAD(+) + n H(+)(out). It catalyses the reaction a plastoquinone + NADPH + (n+1) H(+)(in) = a plastoquinol + NADP(+) + n H(+)(out). Its function is as follows. NDH shuttles electrons from NAD(P)H:plastoquinone, via FMN and iron-sulfur (Fe-S) centers, to quinones in the photosynthetic chain and possibly in a chloroplast respiratory chain. The immediate electron acceptor for the enzyme in this species is believed to be plastoquinone. Couples the redox reaction to proton translocation, and thus conserves the redox energy in a proton gradient. In Paulinella chromatophora, this protein is NAD(P)H-quinone oxidoreductase subunit 5, organellar chromatophore 1 (ndhF1).